The chain runs to 143 residues: Nitrosuccinic acid decarboxylase npaB (143 aa).

Belongs to the carboxymuconolactone decarboxylase family. The cofactor is Mg(2+).

It participates in mycotoxin biosynthesis. Functionally, nitrosuccinic acid decarboxylase; part of the gene cluster that mediates the biosynthesis of the deadly neurotoxic nitroalkane 3-nitropropanoic acid (3-NPA) that acts as an antimetabolite of succinate and irreversibly inhibits succinate dehydrogenase and disrupts mitochondrial oxidative phosphorylation. NpaB facilitates decarboxylation of nitrosuccinic acid produced by the nitrosuccinic acid synthase npaA to yield the final product of the cluster, the lethal mycotoxin 3-NPA. In Metarhizium robertsii (strain ARSEF 23 / ATCC MYA-3075) (Metarhizium anisopliae (strain ARSEF 23)), this protein is Nitrosuccinic acid decarboxylase npaB.